The chain runs to 120 residues: Small ribosomal subunit protein uS10 (120 aa).

Phosphoserine is present on residues S16 and S18.

This sequence belongs to the universal ribosomal protein uS10 family. In terms of tissue distribution, expressed ubiquitously in embryos, highest expression is in the midgut.

The chain is Small ribosomal subunit protein uS10 (RpS20) from Drosophila melanogaster (Fruit fly).